We begin with the raw amino-acid sequence, 518 residues long: GMP synthase [glutamine-hydrolyzing] (518 aa).

One can recognise a Glutamine amidotransferase type-1 domain in the interval T8–N201. Residue C85 is the Nucleophile of the active site. Residues H175 and E177 contribute to the active site. One can recognise a GMPS ATP-PPase domain in the interval W202 to R393. S229–S235 contributes to the ATP binding site.

Homodimer.

The catalysed reaction is XMP + L-glutamine + ATP + H2O = GMP + L-glutamate + AMP + diphosphate + 2 H(+). The protein operates within purine metabolism; GMP biosynthesis; GMP from XMP (L-Gln route): step 1/1. Its function is as follows. Catalyzes the synthesis of GMP from XMP. In Bartonella quintana (strain Toulouse) (Rochalimaea quintana), this protein is GMP synthase [glutamine-hydrolyzing].